A 518-amino-acid polypeptide reads, in one-letter code: Membrane-bound lytic murein transglycosylase F (518 aa).

The N-terminal stretch at Met-1–Ala-21 is a signal peptide. Residues Leu-22–Gly-269 form a non-LT domain region. The interval Asp-270–Asn-518 is LT domain. Glu-314 is a catalytic residue.

This sequence in the N-terminal section; belongs to the bacterial solute-binding protein 3 family. It in the C-terminal section; belongs to the transglycosylase Slt family.

It localises to the cell outer membrane. The enzyme catalyses Exolytic cleavage of the (1-&gt;4)-beta-glycosidic linkage between N-acetylmuramic acid (MurNAc) and N-acetylglucosamine (GlcNAc) residues in peptidoglycan, from either the reducing or the non-reducing ends of the peptidoglycan chains, with concomitant formation of a 1,6-anhydrobond in the MurNAc residue.. Its function is as follows. Murein-degrading enzyme that degrades murein glycan strands and insoluble, high-molecular weight murein sacculi, with the concomitant formation of a 1,6-anhydromuramoyl product. Lytic transglycosylases (LTs) play an integral role in the metabolism of the peptidoglycan (PG) sacculus. Their lytic action creates space within the PG sacculus to allow for its expansion as well as for the insertion of various structures such as secretion systems and flagella. The sequence is that of Membrane-bound lytic murein transglycosylase F from Escherichia coli O6:H1 (strain CFT073 / ATCC 700928 / UPEC).